Consider the following 1200-residue polypeptide: Nuclear pore complex protein Nup133 (1200 aa).

Positions 1–28 (MERNLQKQLYGISRESSPGARRYSMPAA) are disordered.

It belongs to the nucleoporin Nup133 family. In terms of assembly, forms part of the Nup107-Nup160 subcomplex in the nuclear pore.

It is found in the nucleus. The protein localises to the nuclear pore complex. Its function is as follows. Probable component of the nuclear pore complex (NPC). Plays a role in NPC assembly and/or maintenance. The polypeptide is Nuclear pore complex protein Nup133 (Drosophila melanogaster (Fruit fly)).